The following is a 366-amino-acid chain: Ferredoxin--NADP reductase (366 aa).

Residues Asp51, Gln59, Tyr64, Val104, Phe139, Asp308, and Thr349 each coordinate FAD.

This sequence belongs to the ferredoxin--NADP reductase type 2 family. As to quaternary structure, homodimer. It depends on FAD as a cofactor.

It carries out the reaction 2 reduced [2Fe-2S]-[ferredoxin] + NADP(+) + H(+) = 2 oxidized [2Fe-2S]-[ferredoxin] + NADPH. This Polaromonas sp. (strain JS666 / ATCC BAA-500) protein is Ferredoxin--NADP reductase.